We begin with the raw amino-acid sequence, 418 residues long: Glutamyl-tRNA reductase (418 aa).

Residues 49-52 (TCNR), serine 109, 114-116 (EPQ), and glutamine 120 each bind substrate. Cysteine 50 acts as the Nucleophile in catalysis. 189–194 (GAGETI) provides a ligand contact to NADP(+).

It belongs to the glutamyl-tRNA reductase family. Homodimer.

It carries out the reaction (S)-4-amino-5-oxopentanoate + tRNA(Glu) + NADP(+) = L-glutamyl-tRNA(Glu) + NADPH + H(+). The protein operates within porphyrin-containing compound metabolism; protoporphyrin-IX biosynthesis; 5-aminolevulinate from L-glutamyl-tRNA(Glu): step 1/2. In terms of biological role, catalyzes the NADPH-dependent reduction of glutamyl-tRNA(Glu) to glutamate 1-semialdehyde (GSA). The polypeptide is Glutamyl-tRNA reductase (Pectobacterium atrosepticum (strain SCRI 1043 / ATCC BAA-672) (Erwinia carotovora subsp. atroseptica)).